Consider the following 331-residue polypeptide: Nucleotide-binding protein SGR_5570 (331 aa).

Residues 1 to 43 (MTENTHETAPNTADTDTADFDTADTDRADGAADVSTNTPNETG) are disordered. 55–62 (GMSGAGRS) provides a ligand contact to ATP. A GTP-binding site is contributed by 106–109 (DVRG).

This sequence belongs to the RapZ-like family.

Displays ATPase and GTPase activities. The protein is Nucleotide-binding protein SGR_5570 of Streptomyces griseus subsp. griseus (strain JCM 4626 / CBS 651.72 / NBRC 13350 / KCC S-0626 / ISP 5235).